The following is a 358-amino-acid chain: Phosphoribosyl pyrophosphate synthase-associated protein 2 (358 aa).

It belongs to the ribose-phosphate pyrophosphokinase family.

Functionally, seems to play a negative regulatory role in 5-phosphoribose 1-diphosphate synthesis. This Xenopus tropicalis (Western clawed frog) protein is Phosphoribosyl pyrophosphate synthase-associated protein 2 (prpsap2).